The primary structure comprises 660 residues: Bifunctional polymyxin resistance protein ArnA (660 aa).

Residues 1-304 (MKAVIFAYHD…TLGLVAGARL (304 aa)) are formyltransferase ArnAFT. His104 (proton donor; for formyltransferase activity) is an active-site residue. Residues Arg114 and 136 to 140 (VKRAD) each bind (6R)-10-formyltetrahydrofolate. Residues 314–660 (RRIRVLILGV…RSVDVAERAS (347 aa)) form a dehydrogenase ArnADH region. NAD(+)-binding positions include Asp347 and 368–369 (DI). Residues Ala393, Tyr398, and 432-433 (TS) each bind UDP-alpha-D-glucuronate. Glu434 serves as the catalytic Proton acceptor; for decarboxylase activity. UDP-alpha-D-glucuronate is bound by residues Arg460, Asn492, 526–535 (KLIDGGQQKR), and Tyr613. Arg619 serves as the catalytic Proton donor; for decarboxylase activity.

It in the N-terminal section; belongs to the Fmt family. UDP-L-Ara4N formyltransferase subfamily. This sequence in the C-terminal section; belongs to the NAD(P)-dependent epimerase/dehydratase family. UDP-glucuronic acid decarboxylase subfamily. As to quaternary structure, homohexamer, formed by a dimer of trimers.

The catalysed reaction is UDP-alpha-D-glucuronate + NAD(+) = UDP-beta-L-threo-pentopyranos-4-ulose + CO2 + NADH. It carries out the reaction UDP-4-amino-4-deoxy-beta-L-arabinose + (6R)-10-formyltetrahydrofolate = UDP-4-deoxy-4-formamido-beta-L-arabinose + (6S)-5,6,7,8-tetrahydrofolate + H(+). Its pathway is nucleotide-sugar biosynthesis; UDP-4-deoxy-4-formamido-beta-L-arabinose biosynthesis; UDP-4-deoxy-4-formamido-beta-L-arabinose from UDP-alpha-D-glucuronate: step 1/3. It participates in nucleotide-sugar biosynthesis; UDP-4-deoxy-4-formamido-beta-L-arabinose biosynthesis; UDP-4-deoxy-4-formamido-beta-L-arabinose from UDP-alpha-D-glucuronate: step 3/3. The protein operates within bacterial outer membrane biogenesis; lipopolysaccharide biosynthesis. Bifunctional enzyme that catalyzes the oxidative decarboxylation of UDP-glucuronic acid (UDP-GlcUA) to UDP-4-keto-arabinose (UDP-Ara4O) and the addition of a formyl group to UDP-4-amino-4-deoxy-L-arabinose (UDP-L-Ara4N) to form UDP-L-4-formamido-arabinose (UDP-L-Ara4FN). The modified arabinose is attached to lipid A and is required for resistance to polymyxin and cationic antimicrobial peptides. The chain is Bifunctional polymyxin resistance protein ArnA from Salmonella dublin (strain CT_02021853).